The following is a 280-amino-acid chain: Probable endonuclease 4 (280 aa).

Positions 69, 109, 145, 179, 182, 216, 229, 231, and 261 each coordinate Zn(2+).

It belongs to the AP endonuclease 2 family. It depends on Zn(2+) as a cofactor.

It catalyses the reaction Endonucleolytic cleavage to 5'-phosphooligonucleotide end-products.. In terms of biological role, endonuclease IV plays a role in DNA repair. It cleaves phosphodiester bonds at apurinic or apyrimidinic (AP) sites, generating a 3'-hydroxyl group and a 5'-terminal sugar phosphate. The polypeptide is Probable endonuclease 4 (Photorhabdus laumondii subsp. laumondii (strain DSM 15139 / CIP 105565 / TT01) (Photorhabdus luminescens subsp. laumondii)).